We begin with the raw amino-acid sequence, 700 residues long: Tectonic-2 (700 aa).

The signal sequence occupies residues 1–25; the sequence is MGSLSPLSFLWGLLLLQGVLRPLRG. Over 26-665 the chain is Extracellular; that stretch reads DPVFIPPFIR…YYQGEPRPQC (640 aa). Residues Asn-76, Asn-82, Asn-146, Asn-156, and Asn-389 are each glycosylated (N-linked (GlcNAc...) asparagine). The helical transmembrane segment at 666–682 threads the bilayer; the sequence is VAKGLMLLSLLMLAILL. At 683 to 700 the chain is on the cytoplasmic side; the sequence is RHPWVGMCKAWSSASIQH.

The protein belongs to the tectonic family. As to quaternary structure, part of the tectonic-like complex (also named B9 complex).

The protein localises to the membrane. The protein resides in the cytoplasm. It is found in the cytoskeleton. Its subcellular location is the cilium basal body. Functionally, component of the tectonic-like complex, a complex localized at the transition zone of primary cilia and acting as a barrier that prevents diffusion of transmembrane proteins between the cilia and plasma membranes. Required for hedgehog signaling transduction. This chain is Tectonic-2 (Tctn2), found in Rattus norvegicus (Rat).